The primary structure comprises 102 residues: NADH-quinone oxidoreductase subunit K (102 aa).

The next 3 helical transmembrane spans lie at 5-25, 31-51, and 66-86; these read ITHY…GIFL, IIIL…FVAF, and FVLT…VVFF.

This sequence belongs to the complex I subunit 4L family. NDH-1 is composed of 14 different subunits. Subunits NuoA, H, J, K, L, M, N constitute the membrane sector of the complex.

The protein localises to the cell inner membrane. The catalysed reaction is a quinone + NADH + 5 H(+)(in) = a quinol + NAD(+) + 4 H(+)(out). NDH-1 shuttles electrons from NADH, via FMN and iron-sulfur (Fe-S) centers, to quinones in the respiratory chain. The immediate electron acceptor for the enzyme in this species is believed to be ubiquinone. Couples the redox reaction to proton translocation (for every two electrons transferred, four hydrogen ions are translocated across the cytoplasmic membrane), and thus conserves the redox energy in a proton gradient. The protein is NADH-quinone oxidoreductase subunit K of Bartonella grahamii (strain as4aup).